Reading from the N-terminus, the 151-residue chain is MKSLRLEDAVPQSGSRHRKLRVGRGHSAGQGKTSGRGMRGQKCRSGGGVRPGFEGGQIPLYMRLPKLKGFELVNPSSYTIVNLKQLRDLPADSEVNIETLLDAGILTATSGPLRVLGDGEAHVALQITAAYFTASAREKIEAAGGTCTVEA.

The interval 1-51 (MKSLRLEDAVPQSGSRHRKLRVGRGHSAGQGKTSGRGMRGQKCRSGGGVRP) is disordered. Basic residues predominate over residues 15–24 (SRHRKLRVGR). Residues 26–38 (HSAGQGKTSGRGM) are compositionally biased toward gly residues.

Belongs to the universal ribosomal protein uL15 family. Part of the 50S ribosomal subunit.

Its function is as follows. Binds to the 23S rRNA. In Gloeobacter violaceus (strain ATCC 29082 / PCC 7421), this protein is Large ribosomal subunit protein uL15.